The chain runs to 649 residues: Acetyl-coenzyme A synthetase (649 aa).

CoA-binding positions include 190-193 (RGGR) and threonine 310. ATP contacts are provided by residues 386 to 388 (GEP), 410 to 415 (DTWWQT), aspartate 499, and arginine 514. CoA is bound at residue serine 522. Arginine 525 is an ATP binding site. Residues valine 536, histidine 538, and valine 541 each contribute to the Mg(2+) site. A CoA-binding site is contributed by arginine 583. Lysine 608 is subject to N6-acetyllysine.

This sequence belongs to the ATP-dependent AMP-binding enzyme family. It depends on Mg(2+) as a cofactor. Post-translationally, acetylated. Deacetylation by the SIR2-homolog deacetylase activates the enzyme.

It catalyses the reaction acetate + ATP + CoA = acetyl-CoA + AMP + diphosphate. Catalyzes the conversion of acetate into acetyl-CoA (AcCoA), an essential intermediate at the junction of anabolic and catabolic pathways. AcsA undergoes a two-step reaction. In the first half reaction, AcsA combines acetate with ATP to form acetyl-adenylate (AcAMP) intermediate. In the second half reaction, it can then transfer the acetyl group from AcAMP to the sulfhydryl group of CoA, forming the product AcCoA. In Methylorubrum populi (strain ATCC BAA-705 / NCIMB 13946 / BJ001) (Methylobacterium populi), this protein is Acetyl-coenzyme A synthetase.